The chain runs to 91 residues: Protein YchS (91 aa).

The sequence is that of Protein YchS (ychS) from Escherichia coli O157:H7.